A 605-amino-acid polypeptide reads, in one-letter code: MDPKAIKEELRLFQSTLLQDGLKELLNENKFVDCTLKIGDRCFPCHRLIMAACSPYFRELFFSEDGKEKDIGKEVVLDDVDPNIMDMILQYLYSAEIDLVDDNVQEIFAVANRFQIPSVFTVCVNYLQQKLSMANCLAVFRLGLVLSVPRLAIAARDFIADRFETVSSEEEFLQLAPHELLALIGGDMLNVEKEEVVFESVMKWVRNDKANRVKSLAEAFDCIRFRLLPEKYFREKVETDDIIKGDPELLKKLQLVKDAFKGKLPEKKPKEKKEGEVNGEEEGEEMLPGFLNDNRRLGMYGRDLIVMINDTAAVAYDVVENECFLAAMAEQVPKNHVSLCTKKNQLFIVGGLFVDEESKESPLQCYFYQLDSFSSDWRALPPMPSPRCLFNLGESENLLFAIAGKDLQTNESLDSVMCFDTERMKWSETKKLPLHIHGHSVVSHNNLVYCIGGKTDDNKALSKMFVYNHKQSEWRELASMKTPRAMFGAVVHKGKIIVTGGVNEDGLTALSETYDFDTNKWDTFTEFPQERSSVNLVSSGGNLFSIGGFAIVELEDKNIGPSEITDIWQYEEDKKTWSGMLREMRYASGSSCVGMRLNAARMPKL.

In terms of domain architecture, BTB spans 32–102 (VDCTLKIGDR…YSAEIDLVDD (71 aa)). The 103-residue stretch at 136 to 238 (CLAVFRLGLV…PEKYFREKVE (103 aa)) folds into the BACK domain. Kelch repeat units follow at residues 345 to 397 (QLFI…ESEN), 398 to 446 (LLFA…SHNN), 447 to 494 (LVYC…VHKG), 496 to 541 (IIVT…SSGG), and 543 to 598 (LFSI…MRLN).

The protein localises to the cytoplasm. It localises to the cytoskeleton. Its subcellular location is the sarcoplasmic reticulum membrane. The protein resides in the endoplasmic reticulum membrane. In terms of biological role, involved in skeletal muscle development and maintenance. This Danio rerio (Zebrafish) protein is Kelch-like protein 41b.